Here is a 518-residue protein sequence, read N- to C-terminus: Glutamate--cysteine ligase (518 aa).

This sequence belongs to the glutamate--cysteine ligase type 1 family. Type 1 subfamily.

The enzyme catalyses L-cysteine + L-glutamate + ATP = gamma-L-glutamyl-L-cysteine + ADP + phosphate + H(+). Its pathway is sulfur metabolism; glutathione biosynthesis; glutathione from L-cysteine and L-glutamate: step 1/2. In Salmonella typhi, this protein is Glutamate--cysteine ligase.